A 276-amino-acid chain; its full sequence is Small ribosomal subunit protein uS2 (276 aa).

S2 is modified (N-acetylserine).

This sequence belongs to the universal ribosomal protein uS2 family. As to quaternary structure, component of the small ribosomal subunit. Mature ribosomes consist of a small (40S) and a large (60S) subunit. The 40S subunit contains about 33 different proteins and 1 molecule of RNA (18S). The 60S subunit contains about 49 different proteins and 3 molecules of RNA (28S, 5.8S and 5S). Interacts with rps-21.

Its subcellular location is the cytoplasm. In terms of biological role, required for the assembly and/or stability of the 40S ribosomal subunit. Required for the processing of the 20S rRNA-precursor to mature 18S rRNA in a late step of the maturation of 40S ribosomal subunits. Involved in cold-warm shock-induced translocation of the RNA exosome components from the nucleolus to nucleoplasm. This Caenorhabditis elegans protein is Small ribosomal subunit protein uS2.